Consider the following 84-residue polypeptide: uncharacterized protein (84 aa).

2 helical membrane-spanning segments follow: residues 7–27 (HVNFQIVVGIPLLIKAVILCI) and 52–72 (ITIIPHSVLYVSLSYYIINPC).

It is found in the membrane. This is an uncharacterized protein from Saccharomyces cerevisiae (strain ATCC 204508 / S288c) (Baker's yeast).